A 162-amino-acid chain; its full sequence is Ribose-5-phosphate isomerase B (162 aa).

D-ribulose 5-phosphate-binding positions include 11 to 12 (DH) and 70 to 74 (GSGNG). The active-site Proton acceptor is Glu-75. His-102 (proton donor) is an active-site residue. Residues Asn-103, Arg-113, Arg-137, and Arg-141 each coordinate D-ribulose 5-phosphate.

This sequence belongs to the LacAB/RpiB family. Homodimer.

It catalyses the reaction aldehydo-D-ribose 5-phosphate = D-ribulose 5-phosphate. The protein operates within carbohydrate degradation; pentose phosphate pathway; D-ribose 5-phosphate from D-ribulose 5-phosphate (non-oxidative stage): step 1/1. Catalyzes the interconversion of ribulose-5-P and ribose-5-P. The sequence is that of Ribose-5-phosphate isomerase B from Mycobacterium bovis (strain ATCC BAA-935 / AF2122/97).